We begin with the raw amino-acid sequence, 499 residues long: Putative DUF21 domain-containing protein At1g03270 (499 aa).

Topologically, residues 1-32 (MVVLSTLALVRAAYSLNSFVFEAEDIRFGSPW) are extracellular. The CNNM transmembrane domain occupies 29-211 (GSPWWFVVVG…GKGGELTHEE (183 aa)). A helical transmembrane segment spans residues 33 to 53 (WFVVVGVACFLVLFAGIMSGL). The Cytoplasmic segment spans residues 54-91 (TLGLMSLGLVELEILQQSGSSAEKKQAAAILPVVKKQH). The chain crosses the membrane as a helical span at residues 92–112 (QLLVTLLLCNAAAMEALPICL). Residues 113–114 (DK) lie on the Extracellular side of the membrane. A helical membrane pass occupies residues 115–135 (IFHPFVAVLLSVTFVLAFGEI). The Cytoplasmic portion of the chain corresponds to 136–145 (IPQAICSRYG). A helical membrane pass occupies residues 146–166 (LAVGANFLWLVRILMIICYPI). The Extracellular portion of the chain corresponds to 167–499 (AYPIGKVLDA…TEPLLAESDR (333 aa)). N181 carries N-linked (GlcNAc...) asparagine glycosylation. CBS domains lie at 230–291 (MTPI…EAPV), 295–359 (SIRK…SNLT), and 365–431 (HESH…IVDE). N-linked (GlcNAc...) asparagine glycans are attached at residues N357, N391, and N484.

It is found in the membrane. In Arabidopsis thaliana (Mouse-ear cress), this protein is Putative DUF21 domain-containing protein At1g03270 (CBSDUF4).